The primary structure comprises 411 residues: Dipeptidase 1 (411 aa).

The first 16 residues, 1 to 16 (MWSGWWLWPLVAVCTA), serve as a signal peptide directing secretion. 2 residues coordinate Zn(2+): histidine 36 and aspartate 38. Asparagine 57 carries N-linked (GlcNAc...) asparagine glycosylation. Cysteine 87 and cysteine 170 are oxidised to a cystine. Glutamate 141 serves as a coordination point for Zn(2+). Residue histidine 168 coordinates substrate. Histidine 214 and histidine 235 together coordinate Zn(2+). Cysteine 242 and cysteine 274 are joined by a disulfide. Arginine 246 lines the substrate pocket. Residue asparagine 279 is glycosylated (N-linked (GlcNAc...) asparagine). Aspartate 304 is a substrate binding site. Asparagine 332 and asparagine 358 each carry an N-linked (GlcNAc...) asparagine glycan. Residue serine 385 is the site of GPI-anchor amidated serine attachment. A propeptide spans 386–411 (GASSLHRHWGLLLASLAPLVLCLSLL) (removed in mature form).

This sequence belongs to the metallo-dependent hydrolases superfamily. Peptidase M19 family. As to quaternary structure, homodimer; disulfide-linked. It depends on Zn(2+) as a cofactor. In terms of tissue distribution, expressed in lung and kidneys.

It localises to the apical cell membrane. It is found in the cell projection. Its subcellular location is the microvillus membrane. It carries out the reaction an L-aminoacyl-L-amino acid + H2O = 2 an L-alpha-amino acid. The catalysed reaction is leukotriene D4 + H2O = leukotriene E4 + glycine. The enzyme catalyses a beta-lactam + H2O = a substituted beta-amino acid. It catalyses the reaction L-cystine-bis-glycine + 2 H2O = L-cystine + 2 glycine. It carries out the reaction glycyldehydrophenylalanine + H2O = 2,3-didehydrophenylalanine + glycine. With respect to regulation, inhibited by L-penicillamine. Beta-lactamase activity is inhibited by cilastatin. Hydrolyzes a wide range of dipeptides including the conversion of leukotriene D4 to leukotriene E4. Hydrolyzes cystinyl-bis-glycine (cys-bis-gly) formed during glutathione degradation. Also possesses beta lactamase activity and can hydrolyze the beta-lactam antibiotic imipenem. In terms of biological role, independently of its dipeptidase activity, acts as an adhesion receptor for neutrophil recruitment from bloodstream into inflamed lungs and liver. The chain is Dipeptidase 1 (DPEP1) from Homo sapiens (Human).